Here is a 479-residue protein sequence, read N- to C-terminus: RHO1 GEF localizing protein 1 (479 aa).

The disordered stretch occupies residues 460–479; that stretch reads SQKDPSRTDPSKLRRVPVIQ.

In terms of biological role, regulator of RHO1 signaling that acts as a cofactor required for the efficient localization of the TUS1 GTP exchange factor (GEF) for RHO1 to the bud neck during all phases of cytokinesis. RHO1 is a key, essential hub protein in the cell wall integrity (CWI) pathway in which activated RHO1-GTP binds directly to and activates multiple different downstream effectors required for cell wall synthesis and actin assembly during cytokinesis. In Saccharomyces cerevisiae (strain ATCC 204508 / S288c) (Baker's yeast), this protein is RHO1 GEF localizing protein 1.